We begin with the raw amino-acid sequence, 446 residues long: C-type lectin domain family 18 member C (446 aa).

The signal sequence occupies residues 1–26 (MLHPETSPGRGHLLAVLLALLGTAWA). Residues 52–182 (LSLHNRLRSW…AAIEAFVCAY (131 aa)) form the SCP domain. N144 carries N-linked (GlcNAc...) asparagine glycosylation. Residues 228-261 (PRNPCRMSCQNHGRLNISTCHCHCPPGYTGRYCQ) enclose the EGF-like domain. 4 cysteine pairs are disulfide-bonded: C236–C249, C251–C260, C327–C432, and C408–C424. Residues 306–433 (IDGDCFMVSS…CKTRNRYICQ (128 aa)) enclose the C-type lectin domain.

Detected in peripheral blood cells.

The protein localises to the secreted. It is found in the endoplasmic reticulum. It localises to the golgi apparatus. The protein resides in the endosome. Its function is as follows. Binds polysaccharidesin a Ca(2+)-independent manner with a preferentially binding to fucoidan, beta-glucans and galactans. The sequence is that of C-type lectin domain family 18 member C (CLEC18C) from Homo sapiens (Human).